The chain runs to 380 residues: Erythronate-4-phosphate dehydrogenase (380 aa).

The substrate site is built by Ser-45 and Thr-66. Residues 126 to 127 (QV), Asp-146, Thr-174, 205 to 207 (ASR), and Asp-231 each bind NAD(+). Residue Arg-207 is part of the active site. Residue Glu-236 is part of the active site. His-253 acts as the Proton donor in catalysis. Gly-256 lines the NAD(+) pocket. Substrate is bound at residue Tyr-257.

It belongs to the D-isomer specific 2-hydroxyacid dehydrogenase family. PdxB subfamily. As to quaternary structure, homodimer.

It is found in the cytoplasm. The enzyme catalyses 4-phospho-D-erythronate + NAD(+) = (R)-3-hydroxy-2-oxo-4-phosphooxybutanoate + NADH + H(+). Its pathway is cofactor biosynthesis; pyridoxine 5'-phosphate biosynthesis; pyridoxine 5'-phosphate from D-erythrose 4-phosphate: step 2/5. Its function is as follows. Catalyzes the oxidation of erythronate-4-phosphate to 3-hydroxy-2-oxo-4-phosphonooxybutanoate. In Azotobacter vinelandii (strain DJ / ATCC BAA-1303), this protein is Erythronate-4-phosphate dehydrogenase.